Reading from the N-terminus, the 720-residue chain is Fatty acid CoA ligase Acsl3 (720 aa).

The helical; Signal-anchor for type III membrane protein transmembrane segment at isoleucine 21 to phenylalanine 41 threads the bilayer. The Cytoplasmic portion of the chain corresponds to tyrosine 42 to lysine 720. At serine 683 the chain carries Phosphoserine.

This sequence belongs to the ATP-dependent AMP-binding enzyme family. The cofactor is Mg(2+).

It is found in the mitochondrion outer membrane. It localises to the peroxisome membrane. The protein localises to the microsome membrane. Its subcellular location is the endoplasmic reticulum membrane. The catalysed reaction is a long-chain fatty acid + ATP + CoA = a long-chain fatty acyl-CoA + AMP + diphosphate. It carries out the reaction (5Z,8Z,11Z,14Z)-eicosatetraenoate + ATP + CoA = (5Z,8Z,11Z,14Z)-eicosatetraenoyl-CoA + AMP + diphosphate. The enzyme catalyses (E)-hexadec-2-enoate + ATP + CoA = (2E)-hexadecenoyl-CoA + AMP + diphosphate. It catalyses the reaction 15-hydroxy-(5Z,8Z,11Z,13E)-eicosatetraenoate + ATP + CoA = 15-hydroxy-(5Z,8Z,11Z,13E)-eicosatetraenoyl-CoA + AMP + diphosphate. The catalysed reaction is 12-hydroxy-(5Z,8Z,10E,14Z)-eicosatetraenoate + ATP + CoA = 12-hydroxy-(5Z,8Z,10E,14Z)-eicosatetraenoyl-CoA + AMP + diphosphate. It carries out the reaction 5-hydroxy-(6E,8Z,11Z,14Z)-eicosatetraenoate + ATP + CoA = 5-hydroxy-(6E,8Z,11Z,14Z)-eicosatetraenoyl-CoA + AMP + diphosphate. The enzyme catalyses 14,15-epoxy-(5Z,8Z,11Z)-eicosatrienoate + ATP + CoA = 14,15-epoxy-(5Z,8Z,11Z)-eicosatrienoyl-CoA + AMP + diphosphate. It catalyses the reaction 11,12-epoxy-(5Z,8Z,14Z)-eicosatrienoate + ATP + CoA = 11,12-epoxy-(5Z,8Z,14Z)-eicosatrienoyl-CoA + AMP + diphosphate. The catalysed reaction is a medium-chain fatty acid + ATP + CoA = a medium-chain fatty acyl-CoA + AMP + diphosphate. It carries out the reaction hexadecanoate + ATP + CoA = hexadecanoyl-CoA + AMP + diphosphate. The enzyme catalyses tetradecanoate + ATP + CoA = tetradecanoyl-CoA + AMP + diphosphate. It catalyses the reaction dodecanoate + ATP + CoA = dodecanoyl-CoA + AMP + diphosphate. The catalysed reaction is octadecanoate + ATP + CoA = octadecanoyl-CoA + AMP + diphosphate. It carries out the reaction eicosanoate + ATP + CoA = eicosanoyl-CoA + AMP + diphosphate. The enzyme catalyses (9Z)-octadecenoate + ATP + CoA = (9Z)-octadecenoyl-CoA + AMP + diphosphate. It catalyses the reaction (9Z)-hexadecenoate + ATP + CoA = (9Z)-hexadecenoyl-CoA + AMP + diphosphate. The catalysed reaction is (9Z,12Z)-octadecadienoate + ATP + CoA = (9Z,12Z)-octadecadienoyl-CoA + AMP + diphosphate. It carries out the reaction (9Z,12Z,15Z)-octadecatrienoate + ATP + CoA = (9Z,12Z,15Z)-octadecatrienoyl-CoA + AMP + diphosphate. The enzyme catalyses (4Z,7Z,10Z,13Z,16Z,19Z)-docosahexaenoate + ATP + CoA = (4Z,7Z,10Z,13Z,16Z,19Z)-docosahexaenoyl-CoA + AMP + diphosphate. It catalyses the reaction (5Z,8Z,11Z,14Z,17Z)-eicosapentaenoate + ATP + CoA = (5Z,8Z,11Z,14Z,17Z)-eicosapentaenoyl-CoA + AMP + diphosphate. The catalysed reaction is a fatty acid + ATP + CoA = a fatty acyl-CoA + AMP + diphosphate. Functionally, acyl-CoA synthetases (ACSL) activates long-chain fatty acids for both synthesis of cellular lipids, and degradation via beta-oxidation. Required for the incorporation of fatty acids into phosphatidylcholine, the major phospholipid located on the surface of VLDL (very low density lipoproteins). Has mainly an anabolic role in energy metabolism. Mediates hepatic lipogenesis. Preferentially uses myristate, laurate, arachidonate and eicosapentaenoate as substrates. Both isoforms exhibit the same level of activity. This Homo sapiens (Human) protein is Fatty acid CoA ligase Acsl3.